Consider the following 157-residue polypeptide: Endoribonuclease YbeY (157 aa).

Positions 114, 118, and 124 each coordinate Zn(2+).

Belongs to the endoribonuclease YbeY family. Requires Zn(2+) as cofactor.

The protein localises to the cytoplasm. Its function is as follows. Single strand-specific metallo-endoribonuclease involved in late-stage 70S ribosome quality control and in maturation of the 3' terminus of the 16S rRNA. The protein is Endoribonuclease YbeY of Salmonella paratyphi A (strain AKU_12601).